The primary structure comprises 280 residues: Rhomboid-like protein 11, chloroplastic (280 aa).

Residues 1-57 (MSQLLHLHRLSLPQSSLRFRFPPLHRRRAASSPTNSTQPPLQFRPLTVSRSQITCRF) constitute a chloroplast transit peptide. At 58-82 (SQSDITPQFELDKAKDNRKPQKRAN) the chain is on the stromal side. The helical transmembrane segment at 83 to 103 (GIFWIILINLGIYLADHFFQV) threads the bilayer. The Chloroplast intermembrane portion of the chain corresponds to 104-117 (RGIKSLYLYHNFPA). Residues 118–140 (WYQFVTATFCHANWNHLSSNLFF) form a helical membrane-spanning segment. The Stromal segment spans residues 141 to 154 (LYIFGKLVEEEEGN). A helical transmembrane segment spans residues 155–175 (FGLWLSYLFTGVGANLVSWLV). The Chloroplast intermembrane portion of the chain corresponds to 176-178 (LPR). The helical transmembrane segment at 179–199 (NAVSVGASGAVFGLFAISVLV) threads the bilayer. Ser186 functions as the Nucleophile in the catalytic mechanism. At 200–243 (KMSWDWRKILEVLILGQFVIERVMEAAQASAGLSGTIYGGYSLQ) the chain is on the stromal side. Residues 244–264 (TVNHIAHLSGALVGVVLVWLL) form a helical membrane-spanning segment. The active-site Charge relay system is the His250. The Chloroplast intermembrane portion of the chain corresponds to 265 to 280 (SKFPSASMDQDVKKSS).

The protein belongs to the peptidase S54 family. As to quaternary structure, homooligomer.

The protein resides in the plastid. Its subcellular location is the chloroplast inner membrane. Functionally, rhomboid-type serine protease that catalyzes intramembrane proteolysis. May be involved in TIC22 processing during its import. The protein is Rhomboid-like protein 11, chloroplastic of Arabidopsis thaliana (Mouse-ear cress).